The sequence spans 254 residues: Adenosylcobinamide-GDP ribazoletransferase (254 aa).

6 helical membrane-spanning segments follow: residues 36–56, 61–81, 114–134, 138–158, 197–217, and 232–252; these read YYPLVGLILGGALWLALTLLL, PLVTAALLLALELILTGGIHL, ALSAMVYLLLKFSLLAGLLAL, LVPYLVLFMPILSRWIFLIGV, WVLQWPGIAGFILATLFILLF, and LYGASIELSELLFLLGAFPLL.

The protein belongs to the CobS family. Mg(2+) serves as cofactor.

The protein resides in the cell membrane. It catalyses the reaction alpha-ribazole + adenosylcob(III)inamide-GDP = adenosylcob(III)alamin + GMP + H(+). It carries out the reaction alpha-ribazole 5'-phosphate + adenosylcob(III)inamide-GDP = adenosylcob(III)alamin 5'-phosphate + GMP + H(+). It functions in the pathway cofactor biosynthesis; adenosylcobalamin biosynthesis; adenosylcobalamin from cob(II)yrinate a,c-diamide: step 7/7. Joins adenosylcobinamide-GDP and alpha-ribazole to generate adenosylcobalamin (Ado-cobalamin). Also synthesizes adenosylcobalamin 5'-phosphate from adenosylcobinamide-GDP and alpha-ribazole 5'-phosphate. The chain is Adenosylcobinamide-GDP ribazoletransferase from Desulfitobacterium hafniense (strain Y51).